The sequence spans 356 residues: UDP-N-acetylglucosamine--N-acetylmuramyl-(pentapeptide) pyrophosphoryl-undecaprenol N-acetylglucosamine transferase (356 aa).

UDP-N-acetyl-alpha-D-glucosamine-binding positions include 12–14, Asn-124, Arg-163, Ser-188, Ile-242, 261–266, and Gln-287; these read TGG and ALTVSE.

It belongs to the glycosyltransferase 28 family. MurG subfamily.

The protein localises to the cell inner membrane. It carries out the reaction di-trans,octa-cis-undecaprenyl diphospho-N-acetyl-alpha-D-muramoyl-L-alanyl-D-glutamyl-meso-2,6-diaminopimeloyl-D-alanyl-D-alanine + UDP-N-acetyl-alpha-D-glucosamine = di-trans,octa-cis-undecaprenyl diphospho-[N-acetyl-alpha-D-glucosaminyl-(1-&gt;4)]-N-acetyl-alpha-D-muramoyl-L-alanyl-D-glutamyl-meso-2,6-diaminopimeloyl-D-alanyl-D-alanine + UDP + H(+). It functions in the pathway cell wall biogenesis; peptidoglycan biosynthesis. Cell wall formation. Catalyzes the transfer of a GlcNAc subunit on undecaprenyl-pyrophosphoryl-MurNAc-pentapeptide (lipid intermediate I) to form undecaprenyl-pyrophosphoryl-MurNAc-(pentapeptide)GlcNAc (lipid intermediate II). This Azotobacter vinelandii (strain DJ / ATCC BAA-1303) protein is UDP-N-acetylglucosamine--N-acetylmuramyl-(pentapeptide) pyrophosphoryl-undecaprenol N-acetylglucosamine transferase.